Consider the following 72-residue polypeptide: Translation initiation factor IF-1 (72 aa).

Residues 1–72 (MAKEDMIEVE…TRGRITYRFK (72 aa)) enclose the S1-like domain.

Belongs to the IF-1 family. In terms of assembly, component of the 30S ribosomal translation pre-initiation complex which assembles on the 30S ribosome in the order IF-2 and IF-3, IF-1 and N-formylmethionyl-tRNA(fMet); mRNA recruitment can occur at any time during PIC assembly.

The protein localises to the cytoplasm. One of the essential components for the initiation of protein synthesis. Stabilizes the binding of IF-2 and IF-3 on the 30S subunit to which N-formylmethionyl-tRNA(fMet) subsequently binds. Helps modulate mRNA selection, yielding the 30S pre-initiation complex (PIC). Upon addition of the 50S ribosomal subunit IF-1, IF-2 and IF-3 are released leaving the mature 70S translation initiation complex. This chain is Translation initiation factor IF-1, found in Enterococcus faecalis (strain ATCC 700802 / V583).